Consider the following 159-residue polypeptide: Phosphopantetheine adenylyltransferase (159 aa).

Threonine 10 contributes to the substrate binding site. ATP-binding positions include 10-11 (TF) and histidine 18. 3 residues coordinate substrate: lysine 42, leucine 74, and arginine 88. Residues 89–91 (GLR), glutamate 99, and 124–130 (FAYVSSS) contribute to the ATP site.

It belongs to the bacterial CoaD family. Homohexamer. It depends on Mg(2+) as a cofactor.

It localises to the cytoplasm. The catalysed reaction is (R)-4'-phosphopantetheine + ATP + H(+) = 3'-dephospho-CoA + diphosphate. It functions in the pathway cofactor biosynthesis; coenzyme A biosynthesis; CoA from (R)-pantothenate: step 4/5. Functionally, reversibly transfers an adenylyl group from ATP to 4'-phosphopantetheine, yielding dephospho-CoA (dPCoA) and pyrophosphate. This Thioalkalivibrio sulfidiphilus (strain HL-EbGR7) protein is Phosphopantetheine adenylyltransferase.